We begin with the raw amino-acid sequence, 294 residues long: Nucleotide-binding protein Cbei_4857 (294 aa).

8-15 (GLSGAGKT) provides a ligand contact to ATP. Position 59-62 (59-62 (DIRG)) interacts with GTP.

The protein belongs to the RapZ-like family.

Functionally, displays ATPase and GTPase activities. This is Nucleotide-binding protein Cbei_4857 from Clostridium beijerinckii (strain ATCC 51743 / NCIMB 8052) (Clostridium acetobutylicum).